The chain runs to 372 residues: N-methyl-L-tryptophan oxidase (372 aa).

FAD is bound at residue 4–34 (DLIIIGSGSVGAAAGYYATRAGLKVLMTDAH). Position 307 is an S-8alpha-FAD cysteine (C307).

This sequence belongs to the MSOX/MTOX family. MTOX subfamily. In terms of assembly, monomer. Requires FAD as cofactor.

It catalyses the reaction N(alpha)-methyl-L-tryptophan + O2 + H2O = L-tryptophan + formaldehyde + H2O2. Its function is as follows. Catalyzes the oxidative demethylation of N-methyl-L-tryptophan. This chain is N-methyl-L-tryptophan oxidase, found in Salmonella typhimurium (strain LT2 / SGSC1412 / ATCC 700720).